A 531-amino-acid polypeptide reads, in one-letter code: DnaJ homolog subfamily C member 21 (531 aa).

One can recognise a J domain in the interval 3 to 69 (CHYEALGVRR…QERAWYDNHR (67 aa)). 3 disordered regions span residues 279-311 (FGDG…AELY), 327-474 (KAMK…VPAE), and 502-531 (KATG…RKNR). Positions 281-311 (DGSDENEMEEHELKDEEDGKDSDEAEDAELY) are enriched in acidic residues. A phosphoserine mark is found at S283 and S302. The C2H2-type 1 zinc-finger motif lies at 314–338 (LYCPACDKSFKTEKAMKNHEKSKKH). The span at 364–375 (NPLDDNSEEEME) shows a compositional bias: acidic residues. The residue at position 370 (S370) is a Phosphoserine. Over residues 381 to 392 (KLSKKQKKKKQK) the composition is skewed to basic residues. Polar residues predominate over residues 393 to 403 (PAQNYDDNFNV). Over residues 442-453 (KPCDDPKSEAKS) the composition is skewed to basic and acidic residues. The span at 455 to 464 (PKPKGKKTKD) shows a compositional bias: basic residues. The C2H2-type 2 zinc finger occupies 482–506 (ISCTTCHSEFPSRNKLFDHLKATGH). S511 carries the phosphoserine modification. A compositionally biased stretch (low complexity) spans 511–522 (SSSSLNSATSSQ).

Interacts with HSPA8, PA2G4 and ZNF622. In terms of tissue distribution, expressed in brain, placenta, kidney and pancreas.

The protein localises to the cytoplasm. Its subcellular location is the nucleus. It localises to the nucleolus. Functionally, may act as a co-chaperone for HSP70. May play a role in ribosomal RNA (rRNA) biogenesis, possibly in the maturation of the 60S subunit. Binds the precursor 45S rRNA. This is DnaJ homolog subfamily C member 21 (DNAJC21) from Homo sapiens (Human).